A 203-amino-acid chain; its full sequence is Thymidylate kinase (203 aa).

9–16 is an ATP binding site; the sequence is GPEGAGKT.

It belongs to the thymidylate kinase family.

The enzyme catalyses dTMP + ATP = dTDP + ADP. Functionally, phosphorylation of dTMP to form dTDP in both de novo and salvage pathways of dTTP synthesis. The polypeptide is Thymidylate kinase (Staphylococcus epidermidis (strain ATCC 35984 / DSM 28319 / BCRC 17069 / CCUG 31568 / BM 3577 / RP62A)).